The primary structure comprises 183 residues: UPF0200 protein MmarC7_0527 (183 aa).

8 to 15 (GMPGSGKS) contacts ATP.

The protein belongs to the UPF0200 family.

This chain is UPF0200 protein MmarC7_0527, found in Methanococcus maripaludis (strain C7 / ATCC BAA-1331).